Consider the following 1704-residue polypeptide: MAVLRQLALLLWKNYTLQKRKVLVTVLELFLPLLFSGILIWLRLKIQSENVPNATIYPGQSIQELPLFFTFPPPGDTWELAYIPSHSDAAKTVTETVRRALVINMRVRGFPSEKDFEDYIRYDNCSSSVLAAVVFEHPFNHSKEPLPLAVKYHLRFSYTRRNYMWTQTGSFFLKETEGWHTTSLFPLFPNPGPREPTSPDGGEPGYIREGFLAVQHAVDRAIMEYHADAATRQLFQRLTVTIKRFPYPPFIADPFLVAIQYQLPLLLLLSFTYTALTIARAVVQEKERRLKEYMRMMGLSSWLHWSAWFLLFFLFLLIAASFMTLLFCVKVKPNVAVLSRSDPSLVLAFLLCFAISTISFSFMVSTFFSKANMAAAFGGFLYFFTYIPYFFVAPRYNWMTLSQKLCSCLLSNVAMAMGAQLIGKFEAKGMGIQWRDLLSPVNVDDDFCFGQVLGMLLLDSVLYGLVTWYMEAVFPGQFGVPQPWYFFIMPSYWCGKPRAVAGKEEEDSDPEKALRNEYFEAEPEDLVAGIKIKHLSKVFRVGNKDRAAVRDLNLNLYEGQITVLLGHNGAGKTTTLSMLTGLFPPTSGRAYISGYEISQDMVQIRKSLGLCPQHDILFDNLTVAEHLYFYAQLKGLSRQKCPEEVKQMLHIIGLEDKWNSRSRFLSGGMRRKLSIGIALIAGSKVLILDEPTSGMDAISRRAIWDLLQRQKSDRTIVLTTHFMDEADLLGDRIAIMAKGELQCCGSSLFLKQKYGAGYHMTLVKEPHCNPEDISQLVHHHVPNATLESSAGAELSFILPRESTHRFEGLFAKLEKKQKELGIASFGASITTMEEVFLRVGKLVDSSMDIQAIQLPALQYQHERRASDWAVDSNLCGAMDPSDGIGALIEEERTAVKLNTGLALHCQQFWAMFLKKAAYSWREWKMVAAQVLVPLTCVTLALLAINYSSELFDDPMLRLTLGEYGRTVVPFSVPGTSQLGQQLSEHLKDALQAEGQEPREVLGDLEEFLIFRASVEGGGFNERCLVAASFRDVGERTVVNALFNNQAYHSPATALAVVDNLLFKLLCGPHASIVVSNFPQPRSALQAAKDQFNEGRKGFDIALNLLFAMAFLASTFSILAVSERAVQAKHVQFVSGVHVASFWLSALLWDLISFLIPSLLLLVVFKAFDVRAFTRDGHMADTLLLLLLYGWAIIPLMYLMNFFFLGAATAYTRLTIFNILSGIATFLMVTIMRIPAVKLEELSKTLDHVFLVLPNHCLGMAVSSFYENYETRRYCTSSEVAAHYCKKYNIQYQENFYAWSAPGVGRFVASMAASGCAYLILLFLIETNLLQRLRGILCALRRRRTLTELYTRMPVLPEDQDVADERTRILAPSPDSLLHTPLIIKELSKVYEQRVPLLAVDRLSLAVQKGECFGLLGFNGAGKTTTFKMLTGEESLTSGDAFVGGHRISSDVGKVRQRIGYCPQFDALLDHMTGREMLVMYARLRGIPERHIGACVENTLRGLLLEPHANKLVRTYSGGNKRKLSTGIALIGEPAVIFLDEPSTGMDPVARRLLWDTVARARESGKAIIITSHSMEECEALCTRLAIMVQGQFKCLGSPQHLKSKFGSGYSLRAKVQSEGQQEALEEFKAFVDLTFPGSVLEDEHQGMVHYHLPGRDLSWAKVFGILEKAKEKYGVDDYSVSQISLEQVFLSFAHLQPPTAEEGR.

Residue Asn14 is glycosylated (N-linked (GlcNAc...) asparagine). Residues 22-42 (VLVTVLELFLPLLFSGILIWL) traverse the membrane as a helical segment. 3 N-linked (GlcNAc...) asparagine glycosylation sites follow: Asn53, Asn124, and Asn140. 6 helical membrane passes run 261–283 (YQLP…RAVV), 307–327 (AWFL…TLLF), 344–364 (SLVL…SFMV), 373–393 (MAAA…FFVA), 405–425 (LCSC…IGKF), and 447–467 (FCFG…GLVT). Residues 530–763 (IKIKHLSKVF…YGAGYHMTLV (234 aa)) enclose the ABC transporter 1 domain. 566–573 (GHNGAGKT) contacts ATP. Asn620 and Asn783 each carry an N-linked (GlcNAc...) asparagine glycan. 7 consecutive transmembrane segments (helical) span residues 925–945 (MVAA…LAIN), 1100–1120 (IALN…ILAV), 1144–1164 (SALL…LVVF), 1183–1203 (LLLL…NFFF), 1213–1233 (LTIF…IMRI), 1245–1265 (LDHV…SSFY), and 1306–1326 (FVAS…LIET). Positions 1381-1614 (LIIKELSKVY…FGSGYSLRAK (234 aa)) constitute an ABC transporter 2 domain. Position 1416 to 1423 (1416 to 1423 (GFNGAGKT)) interacts with ATP.

Belongs to the ABC transporter superfamily. ABCA family. In terms of assembly, homooligomer; disulfide-linked. Post-translationally, N-glycosylated. Localization at intracellular vesicles is accompanied by processing of oligosaccharide from high mannose type to complex type. N-linked glycosylation at Asn-124 and Asn-140 is required for stability and efficient anterograde trafficking and prevents from proteasomal degradation. In terms of processing, proteolytically cleaved by CTSL and to a lower extent by CTSB within multivesicular bodies (MVB) and lamellar bodies (LB) leading to a mature form of 150 kDa. Expressed in brain, pancreas, skeletal muscle and heart. Highly expressed in the lung in an AT2-cell-specific manner. Weakly expressed in placenta, kidney and liver. Also expressed in medullary thyroid carcinoma cells (MTC) and in C-cell carcinoma.

The protein localises to the endosome. It is found in the multivesicular body membrane. It localises to the cytoplasmic vesicle membrane. The protein resides in the late endosome membrane. Its subcellular location is the lysosome membrane. The enzyme catalyses ATP + H2O + xenobioticSide 1 = ADP + phosphate + xenobioticSide 2.. The catalysed reaction is a 1,2-diacyl-sn-glycero-3-phosphocholine(in) + ATP + H2O = a 1,2-diacyl-sn-glycero-3-phosphocholine(out) + ADP + phosphate + H(+). It catalyses the reaction ATP + H2O + phospholipidSide 1 = ADP + phosphate + phospholipidSide 2.. It carries out the reaction 1,2-dihexadecanoyl-sn-glycero-3-phosphocholine(in) + ATP + H2O = 1,2-dihexadecanoyl-sn-glycero-3-phosphocholine(out) + ADP + phosphate + H(+). The enzyme catalyses cholesterol(in) + ATP + H2O = cholesterol(out) + ADP + phosphate + H(+). The catalysed reaction is a 1,2-diacyl-sn-glycero-3-phospho-(1'-sn-glycerol)(in) + ATP + H2O = a 1,2-diacyl-sn-glycero-3-phospho-(1'-sn-glycerol)(out) + ADP + phosphate + H(+). Its activity is regulated as follows. The ATP-dependent phosphatidylcholine transport is competitively inhibited by miltefosine. Its function is as follows. Catalyzes the ATP-dependent transport of phospholipids such as phosphatidylcholine and phosphoglycerol from the cytoplasm into the lumen side of lamellar bodies, in turn participates in the lamellar bodies biogenesis and homeostasis of pulmonary surfactant. Transports preferentially phosphatidylcholine containing short acyl chains. In addition plays a role as an efflux transporter of miltefosine across macrophage membranes and free cholesterol (FC) through intralumenal vesicles by removing FC from the cell as a component of surfactant and protects cells from free cholesterol toxicity. The sequence is that of Phospholipid-transporting ATPase ABCA3 from Homo sapiens (Human).